Here is a 208-residue protein sequence, read N- to C-terminus: N-(5'-phosphoribosyl)anthranilate isomerase (208 aa).

Belongs to the TrpF family.

It carries out the reaction N-(5-phospho-beta-D-ribosyl)anthranilate = 1-(2-carboxyphenylamino)-1-deoxy-D-ribulose 5-phosphate. Its pathway is amino-acid biosynthesis; L-tryptophan biosynthesis; L-tryptophan from chorismate: step 3/5. The sequence is that of N-(5'-phosphoribosyl)anthranilate isomerase from Deinococcus radiodurans (strain ATCC 13939 / DSM 20539 / JCM 16871 / CCUG 27074 / LMG 4051 / NBRC 15346 / NCIMB 9279 / VKM B-1422 / R1).